The primary structure comprises 167 residues: Leptin (167 aa).

Positions 1-21 (MHCVPLFCFLWFCHHLYYSQA) are cleaved as a signal peptide. Cysteines 117 and 167 form a disulfide.

Belongs to the leptin family.

The protein localises to the secreted. Functionally, key player in the regulation of energy balance and body weight control. Once released into the circulation, has central and peripheral effects by binding LEPR, found in many tissues, which results in the activation of several major signaling pathways. In the hypothalamus, acts as an appetite-regulating factor that induces a decrease in food intake and an increase in energy consumption by inducing anorexinogenic factors and suppressing orexigenic neuropeptides, also regulates bone mass and secretion of hypothalamo-pituitary-adrenal hormones. In the periphery, increases basal metabolism, influences reproductive function, regulates pancreatic beta-cell function and insulin secretion, is pro-angiogenic for endothelial cell and affects innate and adaptive immunity. In the arcuate nucleus of the hypothalamus, activates by depolarization POMC neurons inducing FOS and SOCS3 expression to release anorexigenic peptides and inhibits by hyperpolarization NPY neurons inducing SOCS3 with a consequent reduction on release of orexigenic peptides. In addition to its known satiety inducing effect, has a modulatory role in nutrient absorption. In the intestine, reduces glucose absorption by enterocytes by activating PKC and leading to a sequential activation of p38, PI3K and ERK signaling pathways which exerts an inhibitory effect on glucose absorption. Acts as a growth factor on certain tissues, through the activation of different signaling pathways increases expression of genes involved in cell cycle regulation such as CCND1, via JAK2-STAT3 pathway, or VEGFA, via MAPK1/3 and PI3K-AKT1 pathways. May also play an apoptotic role via JAK2-STAT3 pathway and up-regulation of BIRC5 expression. Pro-angiogenic, has mitogenic activity on vascular endothelial cells and plays a role in matrix remodeling by regulating the expression of matrix metalloproteinases (MMPs) and tissue inhibitors of metalloproteinases (TIMPs). In innate immunity, modulates the activity and function of neutrophils by increasing chemotaxis and the secretion of oxygen radicals. Increases phagocytosis by macrophages and enhances secretion of pro-inflammatory mediators. Increases cytotoxic ability of NK cells. Plays a pro-inflammatory role, in synergy with IL1B, by inducing NOS2 which promotes the production of IL6, IL8 and Prostaglandin E2, through a signaling pathway that involves JAK2, PI3K, MAP2K1/MEK1 and MAPK14/p38. In adaptive immunity, promotes the switch of memory T-cells towards T helper-1 cell immune responses. Increases CD4(+)CD25(-) T-cell proliferation and reduces autophagy during TCR (T-cell receptor) stimulation, through MTOR signaling pathway activation and BCL2 up-regulation. The sequence is that of Leptin (LEP) from Sminthopsis crassicaudata (Fat-tailed dunnart).